The chain runs to 149 residues: Large ribosomal subunit protein bL9 (149 aa).

This sequence belongs to the bacterial ribosomal protein bL9 family.

Binds to the 23S rRNA. The polypeptide is Large ribosomal subunit protein bL9 (Bacillus velezensis (strain DSM 23117 / BGSC 10A6 / LMG 26770 / FZB42) (Bacillus amyloliquefaciens subsp. plantarum)).